The chain runs to 212 residues: Thymidylate kinase (212 aa).

10–17 (GIDGCGKT) contacts ATP.

The protein belongs to the thymidylate kinase family.

The enzyme catalyses dTMP + ATP = dTDP + ADP. In terms of biological role, phosphorylation of dTMP to form dTDP in both de novo and salvage pathways of dTTP synthesis. This chain is Thymidylate kinase, found in Prochlorococcus marinus (strain MIT 9312).